We begin with the raw amino-acid sequence, 2263 residues long: Collagen alpha-6(VI) chain (2263 aa).

The signal sequence occupies residues 1–19 (MMLLILFLVIICSHISVNQ). Residues 20-1391 (DSGPEYADVV…TCCCLFCKCI (1372 aa)) form a nonhelical region region. 5 VWFA domains span residues 27–206 (DVVF…IKDV), 229–411 (DVVF…RNQI), 436–606 (DIYL…RNQV), 622–791 (DIMF…EDDL), and 809–982 (DVVF…FSDV). Residues Asn198, Asn275, Asn288, Asn347, and Asn520 are each glycosylated (N-linked (GlcNAc...) asparagine). Asn930 and Asn988 each carry an N-linked (GlcNAc...) asparagine glycan. 2 VWFA domains span residues 1000–1171 (DLVF…NKRI) and 1187–1371 (DVVV…GSRL). An N-linked (GlcNAc...) asparagine glycan is attached at Asn1290. Residues 1392–1725 (GGDGTMGDPG…GRKGVKGAKG (334 aa)) are triple-helical region. The tract at residues 1397-1723 (MGDPGPPGKR…PPGRKGVKGA (327 aa)) is disordered. The span at 1498–1508 (TPGDRGAKGLR) shows a compositional bias: basic and acidic residues. The short motif at 1508–1510 (RGD) is the Cell attachment site element. The span at 1547–1559 (SRRKTAAHGRRGH) shows a compositional bias: basic residues. Residues 1680–1689 (GDPGGPGETG) show a composition bias toward gly residues. A nonhelical region region spans residues 1726–2263 (LASFSTCELI…MIESAPKQHD (538 aa)). 2 VWFA domains span residues 1757-1937 (ELVF…ERLQ) and 1965-2166 (DAAF…INSI).

This sequence belongs to the type VI collagen family. As to quaternary structure, trimers composed of three different chains: alpha-1(VI), alpha-2(VI), and alpha-3(VI) or alpha-5(VI) or alpha-6(VI). Post-translationally, prolines at the third position of the tripeptide repeating unit (G-X-Y) are hydroxylated in some or all of the chains.

It localises to the secreted. The protein localises to the extracellular space. The protein resides in the extracellular matrix. Functionally, collagen VI acts as a cell-binding protein. This Homo sapiens (Human) protein is Collagen alpha-6(VI) chain (COL6A6).